The primary structure comprises 469 residues: Mannosyl-oligosaccharide 1,2-alpha-mannosidase IA (469 aa).

Residues 1 to 469 (REPADAAVRE…DQKEVEVKVK (469 aa)) are Lumenal-facing. A disulfide bond links cysteine 292 and cysteine 324. N-linked (GlcNAc...) asparagine glycosylation is present at asparagine 329. Glutamate 338 serves as the catalytic Proton donor. Position 449 (threonine 449) interacts with Ca(2+).

The protein belongs to the glycosyl hydrolase 47 family. Requires Ca(2+) as cofactor.

It is found in the golgi apparatus membrane. It catalyses the reaction N(4)-(alpha-D-Man-(1-&gt;2)-alpha-D-Man-(1-&gt;2)-alpha-D-Man-(1-&gt;3)-[alpha-D-Man-(1-&gt;2)-alpha-D-Man-(1-&gt;3)-[alpha-D-Man-(1-&gt;2)-alpha-D-Man-(1-&gt;6)]-alpha-D-Man-(1-&gt;6)]-beta-D-Man-(1-&gt;4)-beta-D-GlcNAc-(1-&gt;4)-beta-D-GlcNAc)-L-asparaginyl-[protein] (N-glucan mannose isomer 9A1,2,3B1,2,3) + 4 H2O = N(4)-(alpha-D-Man-(1-&gt;3)-[alpha-D-Man-(1-&gt;3)-[alpha-D-Man-(1-&gt;6)]-alpha-D-Man-(1-&gt;6)]-beta-D-Man-(1-&gt;4)-beta-D-GlcNAc-(1-&gt;4)-beta-D-GlcNAc)-L-asparaginyl-[protein] (N-glucan mannose isomer 5A1,2) + 4 beta-D-mannose. It carries out the reaction N(4)-(alpha-D-Man-(1-&gt;2)-alpha-D-Man-(1-&gt;2)-alpha-D-Man-(1-&gt;3)-[alpha-D-Man-(1-&gt;3)-[alpha-D-Man-(1-&gt;2)-alpha-D-Man-(1-&gt;6)]-alpha-D-Man-(1-&gt;6)]-beta-D-Man-(1-&gt;4)-beta-D-GlcNAc-(1-&gt;4)-beta-D-GlcNAc)-L-asparaginyl-[protein] (N-glucan mannose isomer 8A1,2,3B1,3) + 3 H2O = N(4)-(alpha-D-Man-(1-&gt;3)-[alpha-D-Man-(1-&gt;3)-[alpha-D-Man-(1-&gt;6)]-alpha-D-Man-(1-&gt;6)]-beta-D-Man-(1-&gt;4)-beta-D-GlcNAc-(1-&gt;4)-beta-D-GlcNAc)-L-asparaginyl-[protein] (N-glucan mannose isomer 5A1,2) + 3 beta-D-mannose. It participates in protein modification; protein glycosylation. With respect to regulation, inhibited by both 1-deoxymannojirimycin and kifunensine. Its function is as follows. Involved in the maturation of Asn-linked oligosaccharides. Progressively trim alpha-1,2-linked mannose residues from Man(9)GlcNAc(2) to produce Man(5)GlcNAc(2). This is Mannosyl-oligosaccharide 1,2-alpha-mannosidase IA (MAN1A1) from Oryctolagus cuniculus (Rabbit).